A 61-amino-acid polypeptide reads, in one-letter code: Metallothionein-2A (61 aa).

At Met1 the chain carries N-acetylmethionine. The beta stretch occupies residues 1–29 (MDPNCSCAAGGSCTCAGSCKCKDCKCTSC). A divalent metal cation-binding residues include Cys5, Cys7, Cys13, Cys15, Cys19, Cys21, Cys24, Cys26, Cys29, Cys33, Cys34, Cys36, Cys37, Cys41, Cys44, Cys48, Cys50, and Cys57. Residues 30–61 (KKSCCSCCPVGCAKCAQGCICKGASDKCSCCA) are alpha. Ser58 bears the Phosphoserine mark. A divalent metal cation is bound by residues Cys59 and Cys60.

The protein belongs to the metallothionein superfamily. Type 1 family. In terms of assembly, interacts with EOLA1.

Metallothioneins have a high content of cysteine residues that bind various heavy metals; these proteins are transcriptionally regulated by both heavy metals and glucocorticoids. The polypeptide is Metallothionein-2A (MT2A) (Sus scrofa (Pig)).